The chain runs to 376 residues: Protein FhaE (376 aa).

Positions 1–37 are cleaved as a signal peptide; that stretch reads MSQIFADRRAAVPARVISFCGAALAVWAGLAVQPAMA.

The polypeptide is Protein FhaE (fhaE) (Bordetella pertussis (strain Tohama I / ATCC BAA-589 / NCTC 13251)).